Consider the following 473-residue polypeptide: ATP synthase subunit beta (473 aa).

153–160 (GGAGVGKT) lines the ATP pocket.

This sequence belongs to the ATPase alpha/beta chains family. F-type ATPases have 2 components, CF(1) - the catalytic core - and CF(0) - the membrane proton channel. CF(1) has five subunits: alpha(3), beta(3), gamma(1), delta(1), epsilon(1). CF(0) has three main subunits: a(1), b(2) and c(9-12). The alpha and beta chains form an alternating ring which encloses part of the gamma chain. CF(1) is attached to CF(0) by a central stalk formed by the gamma and epsilon chains, while a peripheral stalk is formed by the delta and b chains.

It localises to the cell inner membrane. It carries out the reaction ATP + H2O + 4 H(+)(in) = ADP + phosphate + 5 H(+)(out). Produces ATP from ADP in the presence of a proton gradient across the membrane. The catalytic sites are hosted primarily by the beta subunits. This chain is ATP synthase subunit beta, found in Rickettsia bellii (strain RML369-C).